The sequence spans 266 residues: Putative carbamate hydrolase RutD (266 aa).

Positions 14–115 constitute an AB hydrolase-1 domain; sequence PVVVLISGLG…TMLVSVNGWL (102 aa).

It belongs to the AB hydrolase superfamily. Hydrolase RutD family.

It carries out the reaction carbamate + 2 H(+) = NH4(+) + CO2. In terms of biological role, involved in pyrimidine catabolism. May facilitate the hydrolysis of carbamate, a reaction that can also occur spontaneously. The polypeptide is Putative carbamate hydrolase RutD (Shigella flexneri serotype X (strain 2002017)).